Here is a 399-residue protein sequence, read N- to C-terminus: MAREKFERNKPHVNIGTIGHVDHGKTTLTAAITKVLAKKGQAEAQDYAEIDGAPEERERGITINTAHVEYETDGRHYAHVDCPGHADYVKNMITGAAQMDGAILVVAATDGAMAQTKEHILLAKQVGVPALVVALNKCDMVDDEEMIELVEMEIRELLTSYDFPGDDIPVVQVSGLKAIEGEADWETKIDDLMTAVDASIPEPEREIDKPFLMAVEDVFSITGRGTVATGRIERGKVTVGEEVEIVGIRDTRLTTVTGVEMFRKLLDEGMAGDNVGLLLRGIQKEDIERGMVLVKKGSITPHTKFEGEVYVLKKEEGGRHTPFFAGYRPQFYIRTTDVTGQITAFTSDDGSNVEMVMPGDRIKMTGELIAPVAIEQGMRFAIREGGRTIGAGVVSKIIE.

One can recognise a tr-type G domain in the interval lysine 10 to glutamate 204. Residues glycine 19 to threonine 26 form a G1 region. Glycine 19–threonine 26 contacts GTP. Threonine 26 is a binding site for Mg(2+). The G2 stretch occupies residues glycine 60–asparagine 64. A G3 region spans residues aspartate 81–glycine 84. Residues aspartate 81 to histidine 85 and asparagine 136 to aspartate 139 each bind GTP. Residues asparagine 136–aspartate 139 form a G4 region. Residues serine 174 to leucine 176 form a G5 region.

It belongs to the TRAFAC class translation factor GTPase superfamily. Classic translation factor GTPase family. EF-Tu/EF-1A subfamily. As to quaternary structure, monomer.

The protein resides in the cytoplasm. It catalyses the reaction GTP + H2O = GDP + phosphate + H(+). GTP hydrolase that promotes the GTP-dependent binding of aminoacyl-tRNA to the A-site of ribosomes during protein biosynthesis. The polypeptide is Elongation factor Tu (Prochlorococcus marinus (strain NATL1A)).